Reading from the N-terminus, the 209-residue chain is MQPRRIARELALLALSQLPQKPERLTTQDLQSVVVAAVRTLAGEAQDALETAAMELKRGRDRLLASEIQAVDVQSSRAMVTEAITLAETAVNRLGMVLDLPEFVQLANQQQVRDFSLDILKQVLTHRTAIDHLLETALVDWQFNRLAQIDRNILRIAVAEILYLKTPTQVTINEAVELAKRYSDEDGYRFVNGVLRRTIPHLEAQAQGT.

Belongs to the NusB family.

In terms of biological role, involved in transcription antitermination. Required for transcription of ribosomal RNA (rRNA) genes. Binds specifically to the boxA antiterminator sequence of the ribosomal RNA (rrn) operons. In Cyanothece sp. (strain PCC 7425 / ATCC 29141), this protein is Transcription antitermination protein NusB.